We begin with the raw amino-acid sequence, 178 residues long: Nicotinamide-nucleotide adenylyltransferase (178 aa).

It belongs to the archaeal NMN adenylyltransferase family.

Its subcellular location is the cytoplasm. The enzyme catalyses beta-nicotinamide D-ribonucleotide + ATP + H(+) = diphosphate + NAD(+). It functions in the pathway cofactor biosynthesis; NAD(+) biosynthesis; NAD(+) from nicotinamide D-ribonucleotide: step 1/1. The protein is Nicotinamide-nucleotide adenylyltransferase of Caldivirga maquilingensis (strain ATCC 700844 / DSM 13496 / JCM 10307 / IC-167).